Consider the following 361-residue polypeptide: Isocitrate dehydrogenase [NAD] subunit 1, mitochondrial (361 aa).

A mitochondrion-targeting transit peptide spans 1–12 (MLRQGIAAQKKS). Substrate contacts are provided by Arg-110, Arg-141, and Asp-229. Asp-229 lines the Mg(2+) pocket.

The protein belongs to the isocitrate and isopropylmalate dehydrogenases family. As to quaternary structure, octamer of two non-identical subunits IDH1 and IDH2. Mg(2+) serves as cofactor. Requires Mn(2+) as cofactor.

The protein resides in the mitochondrion. It carries out the reaction D-threo-isocitrate + NAD(+) = 2-oxoglutarate + CO2 + NADH. Performs an essential role in the oxidative function of the citric acid cycle. This is Isocitrate dehydrogenase [NAD] subunit 1, mitochondrial (IDH1) from Kluyveromyces lactis (strain ATCC 8585 / CBS 2359 / DSM 70799 / NBRC 1267 / NRRL Y-1140 / WM37) (Yeast).